The chain runs to 408 residues: Acetate kinase (408 aa).

Asn-7 is a Mg(2+) binding site. Lys-14 lines the ATP pocket. Arg-91 provides a ligand contact to substrate. The Proton donor/acceptor role is filled by Asp-148. Residues 208-212 (HLGNG), 283-285 (DFR), and 331-335 (GIGEN) each bind ATP. Residue Glu-384 coordinates Mg(2+).

This sequence belongs to the acetokinase family. In terms of assembly, homodimer. Mg(2+) serves as cofactor. The cofactor is Mn(2+).

It is found in the cytoplasm. It carries out the reaction acetate + ATP = acetyl phosphate + ADP. It participates in metabolic intermediate biosynthesis; acetyl-CoA biosynthesis; acetyl-CoA from acetate: step 1/2. Its function is as follows. Catalyzes the formation of acetyl phosphate from acetate and ATP. Can also catalyze the reverse reaction. The polypeptide is Acetate kinase (Methanosarcina barkeri (strain Fusaro / DSM 804)).